The sequence spans 283 residues: Polyamine aminopropyltransferase (283 aa).

The PABS domain maps to 2–237 (ELWYTEEHTD…GHWLFGFASK (236 aa)). Glutamine 31 provides a ligand contact to S-methyl-5'-thioadenosine. Spermidine contacts are provided by histidine 62 and aspartate 86. S-methyl-5'-thioadenosine is bound by residues glutamate 106 and 137–138 (DG). The Proton acceptor role is filled by aspartate 155. A spermidine-binding site is contributed by 155–158 (DSTD). Proline 162 is a binding site for S-methyl-5'-thioadenosine.

It belongs to the spermidine/spermine synthase family. As to quaternary structure, homodimer or homotetramer.

It localises to the cytoplasm. The enzyme catalyses S-adenosyl 3-(methylsulfanyl)propylamine + putrescine = S-methyl-5'-thioadenosine + spermidine + H(+). It functions in the pathway amine and polyamine biosynthesis; spermidine biosynthesis; spermidine from putrescine: step 1/1. Functionally, catalyzes the irreversible transfer of a propylamine group from the amino donor S-adenosylmethioninamine (decarboxy-AdoMet) to putrescine (1,4-diaminobutane) to yield spermidine. The sequence is that of Polyamine aminopropyltransferase from Clostridium perfringens (strain ATCC 13124 / DSM 756 / JCM 1290 / NCIMB 6125 / NCTC 8237 / Type A).